Here is a 239-residue protein sequence, read N- to C-terminus: Demethylmenaquinone methyltransferase (239 aa).

S-adenosyl-L-methionine-binding positions include T60, D81, and 106–107 (DA).

Belongs to the class I-like SAM-binding methyltransferase superfamily. MenG/UbiE family.

The enzyme catalyses a 2-demethylmenaquinol + S-adenosyl-L-methionine = a menaquinol + S-adenosyl-L-homocysteine + H(+). Its pathway is quinol/quinone metabolism; menaquinone biosynthesis; menaquinol from 1,4-dihydroxy-2-naphthoate: step 2/2. Functionally, methyltransferase required for the conversion of demethylmenaquinol (DMKH2) to menaquinol (MKH2). The chain is Demethylmenaquinone methyltransferase from Staphylococcus haemolyticus (strain JCSC1435).